Reading from the N-terminus, the 392-residue chain is MSAPLASLSHYKRIVIKIGSALLVDRGAGLKHAWLDAVCDDIAALRAKGVEVLVVSSGAIALGRTVLNLPGGALKLEESQAAAAVGQIALARHWSESLSRSSIVAGQILLTLGDTEERRRYLNARATISQLLKLGAVPIINENDTVATTEIRYGDNDRLAARVATMTGADLLILLSDIDGLYTAPPHLDPEAKLLPVIAEITPEIEAMAGGAASELSRGGMRTKIDAGKIATSAGCAMIITSGKLLNPLRGIDEGAAHSWFAPSAMPVTARKTWIAGQLQPAGILSVDAGAETALRAGKSLLPAGVREVSGHFHRGDTISVVGLEGREIARGLAGYDADEARRIAGHKSAEIEALLGYAGRSAMIHRDDLVMTEQTGRKAGKSTKKKDEAHA.

Lysine 17 is a binding site for ATP. Substrate-binding residues include serine 57, aspartate 144, and asparagine 156. ATP is bound at residue 176-177; it reads SD. Residues 282–359 enclose the PUA domain; sequence AGILSVDAGA…AEIEALLGYA (78 aa). The interval 373-392 is disordered; it reads TEQTGRKAGKSTKKKDEAHA.

This sequence belongs to the glutamate 5-kinase family.

It is found in the cytoplasm. The enzyme catalyses L-glutamate + ATP = L-glutamyl 5-phosphate + ADP. It participates in amino-acid biosynthesis; L-proline biosynthesis; L-glutamate 5-semialdehyde from L-glutamate: step 1/2. Functionally, catalyzes the transfer of a phosphate group to glutamate to form L-glutamate 5-phosphate. This Allorhizobium ampelinum (strain ATCC BAA-846 / DSM 112012 / S4) (Agrobacterium vitis (strain S4)) protein is Glutamate 5-kinase.